The following is a 941-amino-acid chain: MSDQKSADATQARDWRPTVFLPKTSFPMKAGLAKKEPEILARWQKEDLYQQLREQRKGAERFILHDGPPYANGDIHIGHALNKILKDIIMRSQTLLGKDVPYIPGWDCHGLPIEWKVEEQFRKKKLNVDKDVNAVEFRQECRKYAVHWVDTQRQEFKRLGVLGEWDNPYLTMNFEAEAIIAGELMRFSETGQIYRGAKPVLWSVVEKTALAEAEVDYADVDSTTIDLAFKITDSKIPELVGGYAVIWTTTPWTIPANRALAYGPDIDYVLVDLNGKHYLFAEALLEDSLKRIGHEGDAPVLWRGKGAELDGSIAQHPMFEKGGFFAEPRPFLGGSHVTTEAGTGIVHMAPDYGEDDFLLCKAHNIDPVFAVEDDGRYRKDWLWMGGEGLVISPKINAADGPICSDLREVGALLATSVLHHSYPHSWRSKAKLIYRCTPQWFIALDRPVEKGAIAGKTLRETALKAIDEVSWFPAKGKNRIQTMVEGRPDWVISRQRAWGVPITLYVNRESGDYLRDPEVNARILAAFRKEGADAWFKANHQLFLGDKYRLEDYEPVNDILDVWFDSGSTHAFVVEARYGEGTRAQLYLEGSDQHRGWFQSSLLESCGSRGHAPYEAVLTHGFTLDGTGRKMSKSVGNVIDPLKVINESGADILRMWVASTDYNEDVRISKEVLSGTSDGYRKLRNSFRYLLGALEGFSEEEKVDLADLPELEKYILHLLAELDQALHESVNGFAFNRYLRLLSDFVNNDLSAFFFDIRKDRLYCDVGEAAPQGTEERRAYRTVLDILFHALVRYAAPILCFTAEEVWLHRFPDAGSVHLSVWPEVDGQWKNAVLGEKWAVIREQRQIVTEKIEPLRREKIVGSSLEAEVTLPVDAATAKILSSVDFSEICITAKINLVDASDAAITVDRTQNHKCGRCWQHLPEVEEDGALCDRCKSVVGE.

The short motif at 69–79 is the 'HIGH' region element; the sequence is PYANGDIHIGH. Glu589 contacts L-isoleucyl-5'-AMP. The short motif at 630-634 is the 'KMSKS' region element; it reads KMSKS. ATP is bound at residue Lys633. Zn(2+)-binding residues include Cys915, Cys918, Cys932, and Cys935.

This sequence belongs to the class-I aminoacyl-tRNA synthetase family. IleS type 1 subfamily. Monomer. Requires Zn(2+) as cofactor.

The protein resides in the cytoplasm. The catalysed reaction is tRNA(Ile) + L-isoleucine + ATP = L-isoleucyl-tRNA(Ile) + AMP + diphosphate. Catalyzes the attachment of isoleucine to tRNA(Ile). As IleRS can inadvertently accommodate and process structurally similar amino acids such as valine, to avoid such errors it has two additional distinct tRNA(Ile)-dependent editing activities. One activity is designated as 'pretransfer' editing and involves the hydrolysis of activated Val-AMP. The other activity is designated 'posttransfer' editing and involves deacylation of mischarged Val-tRNA(Ile). The protein is Isoleucine--tRNA ligase of Zymomonas mobilis subsp. mobilis (strain ATCC 31821 / ZM4 / CP4).